The following is a 265-amino-acid chain: UDP-N-acetylenolpyruvoylglucosamine reductase (265 aa).

Residues glycine 15 to arginine 169 enclose the FAD-binding PCMH-type domain. Arginine 149 is an active-site residue. Residues aspartate 182–glycine 203 form a disordered region. Cysteine 196 acts as the Proton donor in catalysis.

This sequence belongs to the MurB family. Requires FAD as cofactor.

The protein localises to the cytoplasm. It catalyses the reaction UDP-N-acetyl-alpha-D-muramate + NADP(+) = UDP-N-acetyl-3-O-(1-carboxyvinyl)-alpha-D-glucosamine + NADPH + H(+). It participates in cell wall biogenesis; peptidoglycan biosynthesis. Its function is as follows. Cell wall formation. In Thermus thermophilus (strain ATCC 27634 / DSM 579 / HB8), this protein is UDP-N-acetylenolpyruvoylglucosamine reductase.